The sequence spans 363 residues: NAD(P)H-quinone oxidoreductase subunit 1, chloroplastic (363 aa).

A run of 8 helical transmembrane segments spans residues 30-50 (LVPI…IVWL), 98-118 (FSIG…VIPF), 127-147 (LSIG…GLLM), 165-185 (AAQS…ISLL), 203-223 (FWGW…ISSL), 248-268 (YSGI…LVSS), 300-320 (VFGT…FLFI), and 336-356 (LLNL…LLTT).

This sequence belongs to the complex I subunit 1 family. NDH is composed of at least 16 different subunits, 5 of which are encoded in the nucleus.

It localises to the plastid. Its subcellular location is the chloroplast thylakoid membrane. The catalysed reaction is a plastoquinone + NADH + (n+1) H(+)(in) = a plastoquinol + NAD(+) + n H(+)(out). It carries out the reaction a plastoquinone + NADPH + (n+1) H(+)(in) = a plastoquinol + NADP(+) + n H(+)(out). In terms of biological role, NDH shuttles electrons from NAD(P)H:plastoquinone, via FMN and iron-sulfur (Fe-S) centers, to quinones in the photosynthetic chain and possibly in a chloroplast respiratory chain. The immediate electron acceptor for the enzyme in this species is believed to be plastoquinone. Couples the redox reaction to proton translocation, and thus conserves the redox energy in a proton gradient. The protein is NAD(P)H-quinone oxidoreductase subunit 1, chloroplastic of Solanum lycopersicum (Tomato).